The primary structure comprises 59 residues: Lantibiotic lacticin 3147 A1 (59 aa).

The propeptide occupies 1–29; the sequence is MNKNEIETQPVTWLEEVSDQNFDEDVFGA. The segment at residues 30–31 is a cross-link (lanthionine (Cys-Ser)); that stretch reads CS. 2,3-didehydrobutyrine occurs at positions 32 and 34. The residue at position 36 (S36) is a 2,3-didehydroalanine (Ser). A cross-link (lanthionine (Ser-Cys)) is located at residues 38 to 48; it reads SDYWGNNGAWC. 2 cross-links (beta-methyllanthionine (Thr-Cys)) span residues 49-54 and 51-58; these read TLTHEC and THECMAWC.

Maturation of lantibiotics involves the enzymatic conversion of Thr, and Ser into dehydrated AA and the formation of thioether bonds with cysteine. This is followed by membrane translocation and cleavage of the modified precursor. Post-translationally, it is not established whether the 2,3-didehydrobutyrines are the E- or Z-isomers. In the NMR model they were assumed to be the Z-isomer.

It localises to the secreted. Lanthionine-containing peptide antibiotic (lantibiotic) active on Gram-positive bacteria. The bactericidal activity of lantibiotics is based on depolarization of energized bacterial cytoplasmic membranes, initiated by the formation of aqueous transmembrane pores. When present individually lacticin 3147 A1 exhibits strong activity towards L.lactis strain AM2, weak activity towards L.lactis strain HP and no activity towards L.lactis strain IFPL359, but when combined with lacticin 3147 A2 it displays strong activity towards all three strains. In Lactococcus lactis subsp. lactis (Streptococcus lactis), this protein is Lantibiotic lacticin 3147 A1.